The chain runs to 294 residues: Small ribosomal subunit protein uS2 (294 aa).

The interval 232–294 is disordered; sequence RATGTTEAPE…SAAGEADAAK (63 aa). Basic and acidic residues predominate over residues 246–259; the sequence is EWERELLEGSKSEE. Low complexity predominate over residues 260-294; the sequence is AAAPAAAEEAPAAAEEAPAAAEATESAAGEADAAK.

This sequence belongs to the universal ribosomal protein uS2 family.

The sequence is that of Small ribosomal subunit protein uS2 from Arthrobacter sp. (strain FB24).